A 155-amino-acid polypeptide reads, in one-letter code: Ribosome maturation factor RimP (155 aa).

Belongs to the RimP family.

It localises to the cytoplasm. Its function is as follows. Required for maturation of 30S ribosomal subunits. The sequence is that of Ribosome maturation factor RimP from Synechococcus sp. (strain RCC307).